We begin with the raw amino-acid sequence, 365 residues long: A-type ATP synthase subunit C (365 aa).

It belongs to the V-ATPase V0D/AC39 subunit family. Has multiple subunits with at least A(3), B(3), C, D, E, F, H, I and proteolipid K(x).

It localises to the cell membrane. Component of the A-type ATP synthase that produces ATP from ADP in the presence of a proton gradient across the membrane. The protein is A-type ATP synthase subunit C of Thermococcus kodakarensis (strain ATCC BAA-918 / JCM 12380 / KOD1) (Pyrococcus kodakaraensis (strain KOD1)).